A 588-amino-acid polypeptide reads, in one-letter code: MRKEAIHHRSTDNFAYAYDSETLHLRLQTKKNDVDHVELLFGDPYEWHDGAWQFQTMPMRKTGSDGLFDYWLAEVKPPYRRLRYGFVLRAGGEKLVYTEKGFYHEAPSDDTAYYFCFPFLHRVDLFQAPDWVKDTVWYQIFPERFANGNPAISPKGARPWGSEDPTPTSFFGGDLQGIIDHLDYLADLGITGIYLTPIFRAPSNHKYDTADYFEIDPHFGDKETLKTLVKRCHEKGIRVMLDAVFNHCGYEFGPFQDVLKNGAASRYKDWFHIREFPLQTEPRPNYDTFAFVPQMPKLNTAHPEVKRYLLDVATYWIREFDIDGWRLDVANEIDHQFWREFRQAVKALKPDVYILGEIWHDAMPWLRGDQFDAVMNYPLADAALRFFAKEDMSASEFADRLMHVLHSYPKQVNEAAFNLLGSHDTPRLLTVCGGDVRKVKLLFLFQLTFTGSPCIYYGDEIGMTGGNDPECRKCMVWDPEKQNKELYEHVKQLIALRKQYRALRRGDVAFLAADDEVNHLVYAKTDGNETVMIIINRSNEAAEIPMPIDARGKWLVNLLTGERFAAEAETLCVSLPPYGFVLYAVESW.

Positions 247 and 326 each coordinate substrate. The active-site Nucleophile is the Asp-328. Catalysis depends on Glu-357, which acts as the Proton donor. Substrate-binding positions include 423–424 (HD), Asp-468, and Arg-472.

The protein belongs to the glycosyl hydrolase 13 family. In terms of assembly, exists as a monomer or a homodimer in solution. Homodimer is more active and stable than the monomer.

It catalyses the reaction cyclomaltodextrin + H2O = linear maltodextrin. No metal dependence, but Mn(2+) increases the activity with alpha-cyclodextrin as substrate. No effect on the activity with presence or absence of Ca(2+), Zn(2+), Tween-20 or EDTA. Hydrolyzes alpha-, beta- and gamma-cyclodextrins with the highest activity with alpha-cyclodextrin (cyclomaltohexaose). Pullulan is the preferred substrate from linear substrates. Maltose is a major product of these reactions. Is also able to hydrolyze maltotriose and acarbose, and transglycosylate their hydrolytic products. Major reaction products of maltotriose and of acarbose are maltose and glucose, and glucose and pseudotrisaccharide, respectively. No activity with glucose or maltose as substrate. The protein is Cyclomaltodextrinase of Geobacillus thermopakistaniensis (strain MAS1).